Here is a 789-residue protein sequence, read N- to C-terminus: MRTYRYFLLLFWVGQPYPTFSNPLSKRTSGFPAKRRALELSANSRNELSRSKRSWMWNQFFLLEEYTGSDYQYVGKLHSDQDRGDGSLKYILSGDGAGDLFIINENTGDIQATKRLDREEKPVYILRAQAINRRTGRPVEPESEFIIKIHDINDNEPIFTKDVYTATVPEMADVGTFVVQVTATDADDPTYGNSAKVVYSILQGQPYFSVESETGIIKTALLNMDRENREQYQVVIQAKDMGGQMGGLSGTTTVNITLTDVNDNPPRFPQSTYQFKTPESSPPGTPIGRIKASDADVGENAEIEYSITDGEGHDMFDVITDQETQEGIITVKKLLDFEKKRVYTLKVEASNPHIEPRFLYLGPFKDSATVRIVVDDVDEPPVFSKPAYILQIREDAQINTTIGSVAAQDPDAARNPVKYSVDRHTDMDRIFNIDSGNGSIFTSKLLDRETLLWHNITVIATEINNPKQSSRVPLYIKVLDVNDNAPEFAEFYETFVCEKAKADQLIQTLHAVDKDDPYSGHQFSFSLAPEAASGSNFTIQDNKDNTAGILTRKNGYNRHEMSTYLLPVVISDNDYPVQSSTGTVTVRVCACDHHGNMQSCHAEALIHPTGLSTGALVAILLCIVILLVTVVLFAALRRQRKKEPLIISKEDIRDNIVSYNDEGGGEEDTQAFDIGTLRNPKPWRQQSRRDMVPEALFLPRRTPTARDNTDVRDFISQRLRKMNTDPTAPPYDSLATYAYEGTGSVADSLSSLESVTTDGDQDYGYLSDWGPRFKKLADMYGGMDSDKDS.

Residues 1 to 18 form the signal peptide; that stretch reads MRTYRYFLLLFWVGQPYP. The propeptide occupies 19-53; the sequence is TFSNPLSKRTSGFPAKRRALELSANSRNELSRSKR. Cadherin domains follow at residues 54 to 159, 160 to 268, 269 to 383, 384 to 486, and 487 to 608; these read SWMW…EPIF, TKDV…PPRF, PQST…PPVF, SKPA…DNAP, and EFAE…LIHP. At 54–615 the chain is on the extracellular side; the sequence is SWMWNQFFLL…IHPTGLSTGA (562 aa). N-linked (GlcNAc...) asparagine glycosylation occurs at Asn255. The segment at 259–288 is disordered; sequence TDVNDNPPRFPQSTYQFKTPESSPPGTPIG. Residues 269–279 are compositionally biased toward polar residues; that stretch reads PQSTYQFKTPE. Residues Asn399, Asn437, Asn455, and Asn536 are each glycosylated (N-linked (GlcNAc...) asparagine). Residues 616–636 traverse the membrane as a helical segment; sequence LVAILLCIVILLVTVVLFAAL. Topologically, residues 637–789 are cytoplasmic; that stretch reads RRQRKKEPLI…YGGMDSDKDS (153 aa). 2 positions are modified to phosphoserine: Ser785 and Ser789.

As to expression, highly expressed in kidney and brain.

It is found in the cell membrane. Its function is as follows. Cadherins are calcium-dependent cell adhesion proteins. They preferentially interact with themselves in a homophilic manner in connecting cells; cadherins may thus contribute to the sorting of heterogeneous cell types. This is Cadherin-6 (Cdh6) from Rattus norvegicus (Rat).